Reading from the N-terminus, the 488-residue chain is Bifunctional protein HldE (488 aa).

Positions 1 to 330 (MDRKSIESIF…NAVALAHSDS (330 aa)) are ribokinase. 205 to 208 (NRRE) lines the ATP pocket. The active site involves Asp-275. A cytidylyltransferase region spans residues 356 to 488 (FTNGCFDLLH…IIERVLERYS (133 aa)).

It in the N-terminal section; belongs to the carbohydrate kinase PfkB family. This sequence in the C-terminal section; belongs to the cytidylyltransferase family. Homodimer.

It catalyses the reaction D-glycero-beta-D-manno-heptose 7-phosphate + ATP = D-glycero-beta-D-manno-heptose 1,7-bisphosphate + ADP + H(+). It carries out the reaction D-glycero-beta-D-manno-heptose 1-phosphate + ATP + H(+) = ADP-D-glycero-beta-D-manno-heptose + diphosphate. It participates in nucleotide-sugar biosynthesis; ADP-L-glycero-beta-D-manno-heptose biosynthesis; ADP-L-glycero-beta-D-manno-heptose from D-glycero-beta-D-manno-heptose 7-phosphate: step 1/4. Its pathway is nucleotide-sugar biosynthesis; ADP-L-glycero-beta-D-manno-heptose biosynthesis; ADP-L-glycero-beta-D-manno-heptose from D-glycero-beta-D-manno-heptose 7-phosphate: step 3/4. In terms of biological role, catalyzes the phosphorylation of D-glycero-D-manno-heptose 7-phosphate at the C-1 position to selectively form D-glycero-beta-D-manno-heptose-1,7-bisphosphate. Its function is as follows. Catalyzes the ADP transfer from ATP to D-glycero-beta-D-manno-heptose 1-phosphate, yielding ADP-D-glycero-beta-D-manno-heptose. The sequence is that of Bifunctional protein HldE from Pelobacter propionicus (strain DSM 2379 / NBRC 103807 / OttBd1).